The following is a 194-amino-acid chain: NADH-quinone oxidoreductase subunit B (194 aa).

C73, C74, C138, and C168 together coordinate [4Fe-4S] cluster.

It belongs to the complex I 20 kDa subunit family. NDH-1 is composed of 14 different subunits. Subunits NuoB, C, D, E, F, and G constitute the peripheral sector of the complex. [4Fe-4S] cluster serves as cofactor.

It is found in the cell inner membrane. It catalyses the reaction a quinone + NADH + 5 H(+)(in) = a quinol + NAD(+) + 4 H(+)(out). Functionally, NDH-1 shuttles electrons from NADH, via FMN and iron-sulfur (Fe-S) centers, to quinones in the respiratory chain. The immediate electron acceptor for the enzyme in this species is believed to be ubiquinone. Couples the redox reaction to proton translocation (for every two electrons transferred, four hydrogen ions are translocated across the cytoplasmic membrane), and thus conserves the redox energy in a proton gradient. In Bradyrhizobium sp. (strain BTAi1 / ATCC BAA-1182), this protein is NADH-quinone oxidoreductase subunit B.